Reading from the N-terminus, the 1220-residue chain is Plasma membrane calcium-transporting ATPase 3 (1220 aa).

A compositionally biased stretch (polar residues) spans 1–20 (MGDMANSSIEFHPKPQQQRD). The segment at 1–23 (MGDMANSSIEFHPKPQQQRDVPQ) is disordered. Residues 1 to 97 (MGDMANSSIE…NFIPPKQPKT (97 aa)) are Cytoplasmic-facing. Ser-8 is subject to Phosphoserine. Residues 98–118 (FLQLVWEALQDVTLIILEVAA) form a helical membrane-spanning segment. The Extracellular segment spans residues 119-155 (IVSLGLSFYAPPGEESEACGNVSGGAEDEGEAEAGWI). Residues 156 to 176 (EGAAILLSVICVVLVTAFNDW) traverse the membrane as a helical segment. Residues 177–364 (SKEKQFRGLQ…KEKSVLQGKL (188 aa)) lie on the Cytoplasmic side of the membrane. Residues 298–355 (EEEKKDKKGKQQDGAMESSQTKAKKQDGAVAMEMQPLKSAEGGEMEEREKKKANAPKK) form a disordered region. Composition is skewed to basic and acidic residues over residues 299–308 (EEKKDKKGKQ) and 342–355 (MEER…APKK). Residues 365 to 384 (TKLAVQIGKAGLVMSAITVI) form a helical membrane-spanning segment. Over 385 to 417 (ILVLYFVIETFVVEGRTWLAECTPVYVQYFVKF) the chain is Extracellular. The chain crosses the membrane as a helical span at residues 418–435 (FIIGVTVLVVAVPEGLPL). At 436-849 (AVTISLAYSV…MWGRNVYDSI (414 aa)) the chain is on the cytoplasmic side. Asp-473 serves as the catalytic 4-aspartylphosphate intermediate. 2 residues coordinate Mg(2+): Asp-794 and Asp-798. Residues 850-869 (SKFLQFQLTVNVVAVIVAFT) form a helical membrane-spanning segment. Residues 870–879 (GACITQDSPL) lie on the Extracellular side of the membrane. A helical transmembrane segment spans residues 880-900 (KAVQMLWVNLIMDTFASLALA). Residues 901 to 920 (TEPPTESLLLRKPYGRDKPL) are Cytoplasmic-facing. The helical transmembrane segment at 921-943 (ISRTMMKNILGHAVYQLAIIFTL) threads the bilayer. At 944–961 (LFVGELFFDIDSGRNAPL) the chain is on the extracellular side. Residues 962 to 983 (HSPPSEHYTIIFNTFVMMQLFN) form a helical membrane-spanning segment. The Cytoplasmic portion of the chain corresponds to 984-1002 (EINARKIHGERNVFDGIFS). The helical transmembrane segment at 1003–1024 (NPIFCTIVLGTFGIQIVIVQFG) threads the bilayer. Residues 1025–1034 (GKPFSCSPLS) lie on the Extracellular side of the membrane. Residues 1035–1056 (TEQWLWCLFVGVGELVWGQVIA) traverse the membrane as a helical segment. At 1057–1220 (TIPTSQLKCL…SPLHSVETSL (164 aa)) the chain is on the cytoplasmic side. A Phosphothreonine modification is found at Thr-1079. The calmodulin-binding subdomain A stretch occupies residues 1097–1114 (LRRGQILWFRGLNRIQTQ). Phosphothreonine; by PKC is present on Thr-1113. Residues 1115 to 1124 (IRVVKAFRSS) form a calmodulin-binding subdomain B region. Positions 1166–1186 (ENEERLRAPPPPSPNQNNNAI) are disordered.

This sequence belongs to the cation transport ATPase (P-type) (TC 3.A.3) family. Type IIB subfamily. Interacts with PDZD11. Interacts (via N-terminus) with YWHAE. In terms of tissue distribution, highly expressed in the cerebellum. Expressed in adrenal glands.

It localises to the cell membrane. The protein localises to the presynaptic cell membrane. The catalysed reaction is Ca(2+)(in) + ATP + H2O = Ca(2+)(out) + ADP + phosphate + H(+). With respect to regulation, down-regulated by YWHAE. Its function is as follows. ATP-driven Ca(2+) ion pump involved in the maintenance of basal intracellular Ca(2+) levels at the presynaptic terminals. Uses ATP as an energy source to transport cytosolic Ca(2+) ions across the plasma membrane to the extracellular compartment. May counter-transport protons, but the mechanism and the stoichiometry of this Ca(2+)/H(+) exchange remains to be established. This chain is Plasma membrane calcium-transporting ATPase 3, found in Homo sapiens (Human).